The following is a 217-amino-acid chain: Adenylate kinase (217 aa).

Position 10–15 (10–15 (GAGKGT)) interacts with ATP. The tract at residues 30-59 (STGDMFRAAMKEETPLGLEAKSYIDKGELV) is NMP. AMP is bound by residues threonine 31, arginine 36, 57 to 59 (ELV), 85 to 88 (GFPR), and glutamine 92. The LID stretch occupies residues 126–163 (GRRICSVCGTTYHLVFNPPKTPGICDKDGGELYQRADD). Residue arginine 127 participates in ATP binding. The Zn(2+) site is built by cysteine 130 and cysteine 133. Position 136-137 (136-137 (TY)) interacts with ATP. Zn(2+) contacts are provided by cysteine 150 and aspartate 153. AMP contacts are provided by arginine 160 and arginine 171. Residue glutamine 199 participates in ATP binding.

The protein belongs to the adenylate kinase family. Monomer.

Its subcellular location is the cytoplasm. The catalysed reaction is AMP + ATP = 2 ADP. It functions in the pathway purine metabolism; AMP biosynthesis via salvage pathway; AMP from ADP: step 1/1. In terms of biological role, catalyzes the reversible transfer of the terminal phosphate group between ATP and AMP. Plays an important role in cellular energy homeostasis and in adenine nucleotide metabolism. This chain is Adenylate kinase, found in Bacillus subtilis (strain 168).